The following is a 393-amino-acid chain: Pyridoxamine--pyruvate transaminase (393 aa).

Pyridoxal 5'-phosphate contacts are provided by glutamate 68, tyrosine 95, and threonine 146. An N6-(pyridoxal phosphate)lysine modification is found at lysine 197. Arginine 345 contacts pyridoxal 5'-phosphate.

The protein belongs to the class-V pyridoxal-phosphate-dependent aminotransferase family. In terms of assembly, homotetramer. Pyridoxal 5'-phosphate serves as cofactor.

The enzyme catalyses pyridoxamine + pyruvate = pyridoxal + L-alanine. Functionally, catalyzes a reversible transamination reaction between pyridoxamine and pyruvate to form pyridoxal and L-alanine. The polypeptide is Pyridoxamine--pyruvate transaminase (ppaT) (Mesorhizobium japonicum (strain LMG 29417 / CECT 9101 / MAFF 303099) (Mesorhizobium loti (strain MAFF 303099))).